The sequence spans 1057 residues: Self-sufficient cytochrome P450 monooxygenase CYP505E3 (1057 aa).

Cysteine 403 is a heme binding site. The interval 465-488 (PSAAPFSSHARETTNASLPASPGT) is disordered. Residues 494–634 (MYVLYGSNTG…AFEAWETKLW (141 aa)) enclose the Flavodoxin-like domain. FMN is bound by residues 500-504 (SNTGT) and 578-610 (VFGC…QRLV). Residues 671–900 (HDAALGTVIE…RASNAAFHLP (230 aa)) enclose the FAD-binding FR-type domain.

The protein in the N-terminal section; belongs to the cytochrome P450 family. FAD serves as cofactor. Requires FMN as cofactor. The cofactor is heme.

The enzyme catalyses 2 oxidized [cytochrome P450] + NADPH = 2 reduced [cytochrome P450] + NADP(+) + H(+). It catalyses the reaction an organic molecule + reduced [NADPH--hemoprotein reductase] + O2 = an alcohol + oxidized [NADPH--hemoprotein reductase] + H2O + H(+). The catalysed reaction is dodecan-1-ol + reduced [NADPH--hemoprotein reductase] + O2 = 1,5-dodecanediol + oxidized [NADPH--hemoprotein reductase] + H2O + H(+). It carries out the reaction dodecan-1-ol + reduced [NADPH--hemoprotein reductase] + O2 = 1,6-dodecanediol + oxidized [NADPH--hemoprotein reductase] + H2O + H(+). Its function is as follows. Self-sufficient cytochrome P450 monooxygenase that catalyzes the regioselective in-chain hydroxylation of fatty alcohols (C9-15) as well as fatty acids (C9-15) at the omega-1 to omega-7 or omega-1 to omega-6 positions, respectively. Is also able to convert naphthalene to 1-naphthol and 1-naphthol further to 1,3-dihydroxynaphthalene. This chain is Self-sufficient cytochrome P450 monooxygenase CYP505E3, found in Phanerodontia chrysosporium (White-rot fungus).